We begin with the raw amino-acid sequence, 146 residues long: Large ribosomal subunit protein bL19 (146 aa).

This sequence belongs to the bacterial ribosomal protein bL19 family.

Functionally, this protein is located at the 30S-50S ribosomal subunit interface and may play a role in the structure and function of the aminoacyl-tRNA binding site. The polypeptide is Large ribosomal subunit protein bL19 (Bartonella quintana (strain Toulouse) (Rochalimaea quintana)).